Here is a 338-residue protein sequence, read N- to C-terminus: Ketol-acid reductoisomerase (NADP(+)) (338 aa).

One can recognise a KARI N-terminal Rossmann domain in the interval 1–181 (MQIFYDKDCD…GGGRTGIIET (181 aa)). Residues 24 to 27 (YGSQ), Arg47, Ser50, Ser52, and 82 to 85 (DEFQ) contribute to the NADP(+) site. His107 is an active-site residue. Residue Gly133 participates in NADP(+) binding. One can recognise a KARI C-terminal knotted domain in the interval 182–327 (SFREETETDL…AKLRAMMPWI (146 aa)). Positions 190, 194, 226, and 230 each coordinate Mg(2+). Ser251 contacts substrate.

The protein belongs to the ketol-acid reductoisomerase family. Requires Mg(2+) as cofactor.

The enzyme catalyses (2R)-2,3-dihydroxy-3-methylbutanoate + NADP(+) = (2S)-2-acetolactate + NADPH + H(+). It carries out the reaction (2R,3R)-2,3-dihydroxy-3-methylpentanoate + NADP(+) = (S)-2-ethyl-2-hydroxy-3-oxobutanoate + NADPH + H(+). It participates in amino-acid biosynthesis; L-isoleucine biosynthesis; L-isoleucine from 2-oxobutanoate: step 2/4. The protein operates within amino-acid biosynthesis; L-valine biosynthesis; L-valine from pyruvate: step 2/4. In terms of biological role, involved in the biosynthesis of branched-chain amino acids (BCAA). Catalyzes an alkyl-migration followed by a ketol-acid reduction of (S)-2-acetolactate (S2AL) to yield (R)-2,3-dihydroxy-isovalerate. In the isomerase reaction, S2AL is rearranged via a Mg-dependent methyl migration to produce 3-hydroxy-3-methyl-2-ketobutyrate (HMKB). In the reductase reaction, this 2-ketoacid undergoes a metal-dependent reduction by NADPH to yield (R)-2,3-dihydroxy-isovalerate. This chain is Ketol-acid reductoisomerase (NADP(+)), found in Acinetobacter baumannii (strain AB0057).